Here is a 96-residue protein sequence, read N- to C-terminus: Conantokin-E (96 aa).

An N-terminal signal peptide occupies residues 1-24 (LLVPLVTFHLILGMGTLDHGGALT). Residues 25-72 (ERRSADATALKPEPVLLQKSDARSTDDNDKDRLTQMKRILKKRGNKAR) constitute a propeptide that is removed on maturation. The segment at 28–57 (SADATALKPEPVLLQKSDARSTDDNDKDRL) is disordered. Over residues 44-57 (SDARSTDDNDKDRL) the composition is skewed to basic and acidic residues. 4-carboxyglutamate is present on residues Glu75, Glu76, Glu82, Glu86, and Glu95. Positions 82 and 86 each coordinate a divalent metal cation. A disulfide bridge connects residues Cys83 and Cys96.

It belongs to the conotoxin B superfamily. In terms of tissue distribution, expressed by the venom duct.

It is found in the secreted. Its function is as follows. Conantokins inhibit N-methyl-D-aspartate (NMDA) receptors. This toxin has the highest potency for the NR2B/GRIN2B subunit, followed by NR2A/GRIN2A, NR2C/GRIN2C, and NR2D/GRIN2D subunits. The protein is Conantokin-E of Conus ermineus (Agate cone).